Here is a 239-residue protein sequence, read N- to C-terminus: Large ribosomal subunit protein uL1 (239 aa).

Belongs to the universal ribosomal protein uL1 family. As to quaternary structure, part of the 50S ribosomal subunit.

Functionally, binds directly to 23S rRNA. The L1 stalk is quite mobile in the ribosome, and is involved in E site tRNA release. In terms of biological role, protein L1 is also a translational repressor protein, it controls the translation of the L11 operon by binding to its mRNA. This Rickettsia rickettsii (strain Iowa) protein is Large ribosomal subunit protein uL1.